Reading from the N-terminus, the 859-residue chain is Low-density lipoprotein receptor-related protein 12 (859 aa).

The N-terminal stretch at Met1–Ala32 is a signal peptide. Residues Glu33–Arg492 are Extracellular-facing. 2 disulfides stabilise this stretch: Cys47–Cys76 and Cys103–Cys122. One can recognise a CUB 1 domain in the interval Cys47–Gly159. An N-linked (GlcNAc...) asparagine glycan is attached at Asn75. An N-linked (GlcNAc...) asparagine glycan is attached at Asn146. 2 LDL-receptor class A domains span residues Asn165–Ala201 and Pro214–Asp255. 7 cysteine pairs are disulfide-bonded: Cys166-Cys178, Cys173-Cys191, Cys185-Cys200, Cys215-Cys232, Cys222-Cys245, Cys239-Cys254, and Cys259-Cys285. The region spanning Cys259 to Asp372 is the CUB 2 domain. 2 N-linked (GlcNAc...) asparagine glycosylation sites follow: Asn284 and Asn366. LDL-receptor class A domains are found at residues Phe374–Thr411, Met412–Phe449, and Phe450–Pro486. Disulfide bonds link Cys375/Cys388, Cys382/Cys401, Cys395/Cys410, Cys413/Cys426, Cys420/Cys439, Cys433/Cys448, Cys451/Cys463, Cys458/Cys476, and Cys470/Cys485. Asn409 is a glycosylation site (N-linked (GlcNAc...) asparagine). Asn441 carries an N-linked (GlcNAc...) asparagine glycan. Residues Val493–Gly513 traverse the membrane as a helical segment. Residues Cys514 to Cys859 lie on the Cytoplasmic side of the membrane. Disordered regions lie at residues Ala623 to Lys678, Ala693 to Arg723, Ser748 to Asp770, and Gln802 to Asp823. Composition is skewed to polar residues over residues Ser748–Leu757 and Gln802–Asn814.

This sequence belongs to the LDLR family. May interact with RACK1, ZFYVE9 and NMRK2.

It localises to the membrane. The protein localises to the coated pit. Its function is as follows. Probable receptor, which may be involved in the internalization of lipophilic molecules and/or signal transduction. May act as a tumor suppressor. This is Low-density lipoprotein receptor-related protein 12 (LRP12) from Pongo abelii (Sumatran orangutan).